Consider the following 494-residue polypeptide: V-type proton ATPase subunit B (494 aa).

This sequence belongs to the ATPase alpha/beta chains family. As to quaternary structure, V-ATPase is a heteromultimeric enzyme composed of a peripheral catalytic V1 complex (main components: subunits A, B, C, D, E, and F) attached to an integral membrane V0 proton pore complex (main component: the proteolipid protein).

Non-catalytic subunit of the peripheral V1 complex of vacuolar ATPase. V-ATPase is responsible for acidifying a variety of intracellular compartments in eukaryotic cells. This is V-type proton ATPase subunit B (VAPB) from Plasmodium falciparum.